The following is a 635-amino-acid chain: Threonine--tRNA ligase (635 aa).

The TGS domain occupies 1-61; the sequence is MISIRLKDGS…KEDGCLELLD (61 aa). The interval 242–532 is catalytic; it reads DHRRLGRELG…LTEHFGGAFP (291 aa). Zn(2+)-binding residues include Cys-333, His-384, and His-509.

The protein belongs to the class-II aminoacyl-tRNA synthetase family. Homodimer. The cofactor is Zn(2+).

It localises to the cytoplasm. The catalysed reaction is tRNA(Thr) + L-threonine + ATP = L-threonyl-tRNA(Thr) + AMP + diphosphate + H(+). In terms of biological role, catalyzes the attachment of threonine to tRNA(Thr) in a two-step reaction: L-threonine is first activated by ATP to form Thr-AMP and then transferred to the acceptor end of tRNA(Thr). Also edits incorrectly charged L-seryl-tRNA(Thr). In Syntrophomonas wolfei subsp. wolfei (strain DSM 2245B / Goettingen), this protein is Threonine--tRNA ligase.